Reading from the N-terminus, the 468-residue chain is Methylenetetrahydrofolate--tRNA-(uracil-5-)-methyltransferase TrmFO (468 aa).

10–15 (GGGLAG) is an FAD binding site.

It belongs to the MnmG family. TrmFO subfamily. The cofactor is FAD.

Its subcellular location is the cytoplasm. It carries out the reaction uridine(54) in tRNA + (6R)-5,10-methylene-5,6,7,8-tetrahydrofolate + NADH + H(+) = 5-methyluridine(54) in tRNA + (6S)-5,6,7,8-tetrahydrofolate + NAD(+). It catalyses the reaction uridine(54) in tRNA + (6R)-5,10-methylene-5,6,7,8-tetrahydrofolate + NADPH + H(+) = 5-methyluridine(54) in tRNA + (6S)-5,6,7,8-tetrahydrofolate + NADP(+). In terms of biological role, catalyzes the folate-dependent formation of 5-methyl-uridine at position 54 (M-5-U54) in all tRNAs. This chain is Methylenetetrahydrofolate--tRNA-(uracil-5-)-methyltransferase TrmFO, found in Chelativorans sp. (strain BNC1).